The sequence spans 86 residues: UPF0367 protein NATL1_01981 (86 aa).

This sequence belongs to the UPF0367 family.

This chain is UPF0367 protein NATL1_01981, found in Prochlorococcus marinus (strain NATL1A).